A 200-amino-acid polypeptide reads, in one-letter code: Pyridoxal 5'-phosphate synthase subunit PdxT (200 aa).

52-54 (GES) lines the L-glutamine pocket. Cysteine 84 (nucleophile) is an active-site residue. L-glutamine contacts are provided by residues arginine 116 and 145-146 (IR). Active-site charge relay system residues include histidine 181 and glutamate 183.

The protein belongs to the glutaminase PdxT/SNO family. In the presence of PdxS, forms a dodecamer of heterodimers. Only shows activity in the heterodimer.

It carries out the reaction aldehydo-D-ribose 5-phosphate + D-glyceraldehyde 3-phosphate + L-glutamine = pyridoxal 5'-phosphate + L-glutamate + phosphate + 3 H2O + H(+). The catalysed reaction is L-glutamine + H2O = L-glutamate + NH4(+). The protein operates within cofactor biosynthesis; pyridoxal 5'-phosphate biosynthesis. In terms of biological role, catalyzes the hydrolysis of glutamine to glutamate and ammonia as part of the biosynthesis of pyridoxal 5'-phosphate. The resulting ammonia molecule is channeled to the active site of PdxS. The polypeptide is Pyridoxal 5'-phosphate synthase subunit PdxT (Saccharolobus islandicus (strain Y.N.15.51 / Yellowstone #2) (Sulfolobus islandicus)).